The primary structure comprises 343 residues: Methylthioribose-1-phosphate isomerase (343 aa).

Substrate contacts are provided by residues 48–50 (RGA), Arg-88, and Gln-193. Asp-234 serves as the catalytic Proton donor. Position 244–245 (244–245 (NK)) interacts with substrate.

It belongs to the eIF-2B alpha/beta/delta subunits family. MtnA subfamily.

The catalysed reaction is 5-(methylsulfanyl)-alpha-D-ribose 1-phosphate = 5-(methylsulfanyl)-D-ribulose 1-phosphate. Its pathway is amino-acid biosynthesis; L-methionine biosynthesis via salvage pathway; L-methionine from S-methyl-5-thio-alpha-D-ribose 1-phosphate: step 1/6. Catalyzes the interconversion of methylthioribose-1-phosphate (MTR-1-P) into methylthioribulose-1-phosphate (MTRu-1-P). In Thermotoga petrophila (strain ATCC BAA-488 / DSM 13995 / JCM 10881 / RKU-1), this protein is Methylthioribose-1-phosphate isomerase.